Here is a 49-residue protein sequence, read N- to C-terminus: Isoflavone reductase homolog 2 (49 aa).

An NADP(+)-binding site is contributed by 5-11 (GGTGYIG).

This sequence belongs to the NmrA-type oxidoreductase family. Isoflavone reductase subfamily.

The protein resides in the cytoplasm. The polypeptide is Isoflavone reductase homolog 2 (Pseudotsuga menziesii (Douglas-fir)).